Here is a 322-residue protein sequence, read N- to C-terminus: Germ cell-specific gene 1-like protein (322 aa).

The Cytoplasmic portion of the chain corresponds to 1 to 8 (MELSRRNR). The chain crosses the membrane as a helical span at residues 9–29 (SLLSVVLNLLALSFSVAAFFT). At 30–125 (SYWCEGTHKV…IELSPDSEKG (96 aa)) the chain is on the extracellular side. The helical transmembrane segment at 126-146 (VLWLSVISEFLYIILLSLGFL) threads the bilayer. Over 147-166 (LMCLEFFSSSNFIDGLKINA) the chain is Cytoplasmic. Residues 167-187 (FAAIITVLSGLLGMVAHMMYM) form a helical membrane-spanning segment. The Extracellular portion of the chain corresponds to 188 to 209 (TVFQVTVNLGPKDWRPQTWYYG). Residues 210–230 (WSFGLAWLSFTLCMSASVLTL) form a helical membrane-spanning segment. Residues 231 to 322 (NTYTKTILEF…MDLEDDGDQC (92 aa)) are Cytoplasmic-facing.

Belongs to the GSG1 family. In terms of assembly, component of the AMPAR complex.

The protein resides in the cell membrane. It localises to the synapse. In terms of biological role, as a component of the AMPAR complex, modifies AMPA receptor (AMPAR) gating. The sequence is that of Germ cell-specific gene 1-like protein (gsg1l) from Xenopus tropicalis (Western clawed frog).